Here is a 308-residue protein sequence, read N- to C-terminus: Putative T-box protein 30/42 (308 aa).

The T-box DNA-binding region spans 11-192 (MSNEELWKER…KHSTFGNRSE (182 aa)). Residues 186–220 (TFGNRSEGGIKRKTSDAAGQLPSKRSSKKPVKKDV) are disordered.

The protein localises to the nucleus. Its function is as follows. Involved in the regulatory network to control embryonic patterning and morphogenesis. Implicated in negatively regulating vab-7 expression at the anterior of embryos. The chain is Putative T-box protein 30/42 (tbx-30) from Caenorhabditis elegans.